A 671-amino-acid chain; its full sequence is K(+)-insensitive pyrophosphate-energized proton pump (671 aa).

A run of 5 helical transmembrane segments spans residues 4-24, 57-77, 79-99, 128-148, and 156-176; these read LIFTAPLAGLISLTFAAFFAK, TIAVVSVIISLLILFLLDEGL, IAAGFLAGAISSAAAGYIGMS, AVTGLAVIGLALLGTSSLYIL, and VGFGFGASLISLFARAGGGIF. Residue K178 participates in substrate binding. Mg(2+) is bound by residues D181, D185, N208, and D211. Transmembrane regions (helical) follow at residues 223 to 243, 249 to 269, 285 to 305, 310 to 330, 365 to 385, and 393 to 413; these read LFETYVVTSLAAMLLGSLIIG, VLYPLMLGSAAIFASIISVFF, GVGGSTVLSLIAFYYITGFLM, FFYVTVAGVVITVLMVIVTEY, TLVPAVVIAAGILVSYFIVGG, and LYGIAIASVAMLSTAGMIVAL. Mg(2+) is bound at residue D421. The next 4 membrane-spanning stretches (helical) occupy residues 452-472, 490-510, 558-578, and 579-599; these read AVTKGYAIGSTALGALALFAD, VVLSGILLGAVLPFLFSAVMM, MAMPGFLAVIIPLLTGFFLGP, and EALAGLLTGLIVVGFMLALMM. Residues D607, D633, and D637 each contribute to the Ca(2+) site. Substrate is bound at residue K640. Residues 650–670 traverse the membrane as a helical segment; sequence LIKVVNMVAILFSPLIIGGGF.

It belongs to the H(+)-translocating pyrophosphatase (TC 3.A.10) family. K(+)-insensitive subfamily. As to quaternary structure, homodimer. The cofactor is Mg(2+).

The protein localises to the cell membrane. The catalysed reaction is diphosphate + H2O + H(+)(in) = 2 phosphate + 2 H(+)(out). In terms of biological role, proton pump that utilizes the energy of pyrophosphate hydrolysis as the driving force for proton movement across the membrane. Generates a proton motive force. The chain is K(+)-insensitive pyrophosphate-energized proton pump from Methanosarcina mazei (strain ATCC BAA-159 / DSM 3647 / Goe1 / Go1 / JCM 11833 / OCM 88) (Methanosarcina frisia).